The following is a 304-amino-acid chain: UDP-N-acetylenolpyruvoylglucosamine reductase (304 aa).

One can recognise an FAD-binding PCMH-type domain in the interval 33 to 212 (MGGLADLFLI…KEMMDDLTHK (180 aa)). R176 is a catalytic residue. The active-site Proton donor is the S226. E296 is a catalytic residue.

It belongs to the MurB family. It depends on FAD as a cofactor.

The protein localises to the cytoplasm. It catalyses the reaction UDP-N-acetyl-alpha-D-muramate + NADP(+) = UDP-N-acetyl-3-O-(1-carboxyvinyl)-alpha-D-glucosamine + NADPH + H(+). It functions in the pathway cell wall biogenesis; peptidoglycan biosynthesis. Its function is as follows. Cell wall formation. In Exiguobacterium sibiricum (strain DSM 17290 / CCUG 55495 / CIP 109462 / JCM 13490 / 255-15), this protein is UDP-N-acetylenolpyruvoylglucosamine reductase.